The sequence spans 204 residues: Probable nicotinate-nucleotide adenylyltransferase (204 aa).

The protein belongs to the NadD family.

The enzyme catalyses nicotinate beta-D-ribonucleotide + ATP + H(+) = deamido-NAD(+) + diphosphate. The protein operates within cofactor biosynthesis; NAD(+) biosynthesis; deamido-NAD(+) from nicotinate D-ribonucleotide: step 1/1. Its function is as follows. Catalyzes the reversible adenylation of nicotinate mononucleotide (NaMN) to nicotinic acid adenine dinucleotide (NaAD). This chain is Probable nicotinate-nucleotide adenylyltransferase, found in Clostridium beijerinckii (strain ATCC 51743 / NCIMB 8052) (Clostridium acetobutylicum).